The following is a 230-amino-acid chain: uncharacterized protein (230 aa).

The signal sequence occupies residues 1-22; sequence MNIRSFLLISIFTAISYLVVDG. Residues 23 to 167 are Lumenal-facing; that stretch reads ATPRTFAPSA…YTPYGGVKAL (145 aa). Residues 55 to 90 form a disordered region; the sequence is SSSSSSSSISTSHDSQPSTSSSSPSSTSTSSSSGTS. The chain crosses the membrane as a helical span at residues 168–188; the sequence is IGILVGVVVGSVFLLAIVMVI. The Cytoplasmic segment spans residues 189–230; the sequence is ARIWGPRLLANKDQNNNNEDLDSNLVSKDSEGTPQITYASNF. The disordered stretch occupies residues 208-230; sequence DLDSNLVSKDSEGTPQITYASNF.

It is found in the endoplasmic reticulum membrane. This is an uncharacterized protein from Schizosaccharomyces pombe (strain 972 / ATCC 24843) (Fission yeast).